The primary structure comprises 125 residues: Histone H1-like protein HC1 (125 aa).

It belongs to the histone H1/H5 family. HCT subfamily.

In terms of biological role, might have a role analogous to that of eukaryotic histone proteins. The protein is Histone H1-like protein HC1 (hctA) of Chlamydia muridarum (strain MoPn / Nigg).